The primary structure comprises 941 residues: MutS protein homolog 1 (941 aa).

747–754 is a binding site for ATP; sequence GPNMAGKS.

Belongs to the DNA mismatch repair MutS family.

Its subcellular location is the cytoplasm. It localises to the mitochondrion. In terms of biological role, involved in mitochondrial DNA repair. In Schizosaccharomyces pombe (strain 972 / ATCC 24843) (Fission yeast), this protein is MutS protein homolog 1 (msh1).